The following is a 541-amino-acid chain: Arginine--tRNA ligase (541 aa).

Residues 119 to 129 carry the 'HIGH' region motif; it reads ANPTGPLHIGH.

The protein belongs to the class-I aminoacyl-tRNA synthetase family. In terms of assembly, monomer.

It is found in the cytoplasm. The catalysed reaction is tRNA(Arg) + L-arginine + ATP = L-arginyl-tRNA(Arg) + AMP + diphosphate. The sequence is that of Arginine--tRNA ligase (argS) from Helicobacter pylori (strain ATCC 700392 / 26695) (Campylobacter pylori).